The following is a 188-amino-acid chain: Elongation factor P (188 aa).

Belongs to the elongation factor P family.

The protein resides in the cytoplasm. It functions in the pathway protein biosynthesis; polypeptide chain elongation. Involved in peptide bond synthesis. Stimulates efficient translation and peptide-bond synthesis on native or reconstituted 70S ribosomes in vitro. Probably functions indirectly by altering the affinity of the ribosome for aminoacyl-tRNA, thus increasing their reactivity as acceptors for peptidyl transferase. The chain is Elongation factor P from Sulfurovum sp. (strain NBC37-1).